Consider the following 508-residue polypeptide: tRNA(Ile2) 2-agmatinylcytidine synthetase TiaS (508 aa).

A DNA-binding region (OB) is located at residues I367 to V427.

The protein belongs to the TiaS family.

It localises to the cytoplasm. The enzyme catalyses cytidine(34) in tRNA(Ile2) + agmatine + ATP + H2O = 2-agmatinylcytidine(34) in tRNA(Ile2) + AMP + 2 phosphate + 2 H(+). Its function is as follows. ATP-dependent agmatine transferase that catalyzes the formation of 2-agmatinylcytidine (agm2C) at the wobble position (C34) of tRNA(Ile2), converting the codon specificity from AUG to AUA. This is tRNA(Ile2) 2-agmatinylcytidine synthetase TiaS from Methanococcus voltae (strain ATCC BAA-1334 / A3).